The primary structure comprises 159 residues: MAKIKRIITTLVRLLVLGAALSATIVMVTSHDSAEVLNLSFDAKYTNARAFVYFAITNAIASGYSFIALFLSFSTPLWHLVFLLDVFMTLLLTSSISVALAIADVGKKGNSHAGWLPVCGQVPEFCDHVTGALIAGFSAAVLYLVLLLFSIHAVLNPKP.

At 1–6 (MAKIKR) the chain is on the cytoplasmic side. A helical transmembrane segment spans residues 7 to 27 (IITTLVRLLVLGAALSATIVM). At 28-50 (VTSHDSAEVLNLSFDAKYTNARA) the chain is on the extracellular side. An N-linked (GlcNAc...) asparagine glycan is attached at Asn-38. A helical transmembrane segment spans residues 51-73 (FVYFAITNAIASGYSFIALFLSF). The Cytoplasmic segment spans residues 74-86 (STPLWHLVFLLDV). A helical transmembrane segment spans residues 87–107 (FMTLLLTSSISVALAIADVGK). At 108–130 (KGNSHAGWLPVCGQVPEFCDHVT) the chain is on the extracellular side. Residues 131 to 151 (GALIAGFSAAVLYLVLLLFSI) traverse the membrane as a helical segment. The Cytoplasmic segment spans residues 152 to 159 (HAVLNPKP).

This sequence belongs to the Casparian strip membrane proteins (CASP) family. Homodimer and heterodimers.

It is found in the cell membrane. The sequence is that of CASP-like protein 1C1 from Vitis vinifera (Grape).